The sequence spans 152 residues: UPF0178 protein KPK_4355 (152 aa).

It belongs to the UPF0178 family.

This Klebsiella pneumoniae (strain 342) protein is UPF0178 protein KPK_4355.